The primary structure comprises 271 residues: Cytosolic Fe-S cluster assembly factor NUBP2 (271 aa).

Position 1 is an N-acetylmethionine (Met1). Residue 22–29 (GKGGVGKS) participates in ATP binding. The [4Fe-4S] cluster site is built by Cys196 and Cys199.

The protein belongs to the Mrp/NBP35 ATP-binding proteins family. NUBP2/CFD1 subfamily. Heterotetramer of 2 NUBP1 and 2 NUBP2 chains. Interacts with KIFC1. Interacts with NUBP1. It depends on [4Fe-4S] cluster as a cofactor.

The protein localises to the nucleus. The protein resides in the cytoplasm. It is found in the cytoskeleton. Its subcellular location is the microtubule organizing center. It localises to the centrosome. The protein localises to the cilium axoneme. The protein resides in the centriole. Component of the cytosolic iron-sulfur (Fe/S) protein assembly (CIA) machinery. Required for maturation of extramitochondrial Fe-S proteins. The NUBP1-NUBP2 heterotetramer forms a Fe-S scaffold complex, mediating the de novo assembly of an Fe-S cluster and its transfer to target apoproteins. Negatively regulates cilium formation and structure. The chain is Cytosolic Fe-S cluster assembly factor NUBP2 from Bos taurus (Bovine).